Reading from the N-terminus, the 97-residue chain is YcgL domain-containing protein CKO_01183 (97 aa).

The YcgL domain maps to 1 to 85 (MFCVIYRSSK…PPEDLLKQHL (85 aa)). The interval 74–97 (PPPPEDLLKQHLSAPGENKPDAKS) is disordered.

This is YcgL domain-containing protein CKO_01183 from Citrobacter koseri (strain ATCC BAA-895 / CDC 4225-83 / SGSC4696).